The sequence spans 727 residues: Prolyl endopeptidase-like (727 aa).

Residues Ser-559, Asp-645, and His-690 each act as charge relay system in the active site.

It belongs to the peptidase S9A family. Homodimer. Interacts with the AP-1 complex.

The protein resides in the cytoplasm. It localises to the cytosol. The protein localises to the golgi apparatus. It is found in the trans-Golgi network. Its subcellular location is the cytoskeleton. The protein resides in the nucleus. In terms of biological role, serine peptidase whose precise substrate specificity remains unclear. Does not cleave peptides after a arginine or lysine residue. Regulates trans-Golgi network morphology and sorting by regulating the membrane binding of the AP-1 complex. May play a role in the regulation of synaptic vesicle exocytosis. The polypeptide is Prolyl endopeptidase-like (PREPL) (Pongo abelii (Sumatran orangutan)).